A 366-amino-acid chain; its full sequence is Neutral protease 2 homolog BDBG_02110 (366 aa).

The first 19 residues, 1–19 (MQLSSVLLTAAGLLAPVYS), serve as a signal peptide directing secretion. A propeptide spanning residues 23–184 (ISIGRRSEGL…RAKIHDHLAQ (162 aa)) is cleaved from the precursor. Asn-123 and Asn-192 each carry an N-linked (GlcNAc...) asparagine glycan. Residues Cys-272 and Cys-290 are joined by a disulfide bond. His-314 provides a ligand contact to Zn(2+). The active site involves Glu-315. His-318 contributes to the Zn(2+) binding site.

The protein belongs to the peptidase M35 family. It depends on Zn(2+) as a cofactor.

It localises to the secreted. It catalyses the reaction Preferential cleavage of bonds with hydrophobic residues in P1'. Also 3-Asn-|-Gln-4 and 8-Gly-|-Ser-9 bonds in insulin B chain.. Its function is as follows. Secreted metalloproteinase that allows assimilation of proteinaceous substrates. Shows high activities on basic nuclear substrates such as histone and protamine. The polypeptide is Neutral protease 2 homolog BDBG_02110 (Blastomyces gilchristii (strain SLH14081) (Blastomyces dermatitidis)).